The chain runs to 176 residues: NAD(P)H-quinone oxidoreductase subunit 6, chloroplastic (176 aa).

5 helical membrane-spanning segments follow: residues 10-30 (FLLVFLGSGLLVGGLGVVLLP), 32-52 (PIFSAFSLGFVLVCISLLYIL), 61-81 (AQLLIYVGAINVLIIFAVMFM), 92-112 (LWTVGDGITSLVCTTILFSLI), and 152-172 (FFLPFELISIILLVALVGAIS).

The protein belongs to the complex I subunit 6 family. NDH is composed of at least 16 different subunits, 5 of which are encoded in the nucleus.

It is found in the plastid. The protein localises to the chloroplast thylakoid membrane. It catalyses the reaction a plastoquinone + NADH + (n+1) H(+)(in) = a plastoquinol + NAD(+) + n H(+)(out). It carries out the reaction a plastoquinone + NADPH + (n+1) H(+)(in) = a plastoquinol + NADP(+) + n H(+)(out). In terms of biological role, NDH shuttles electrons from NAD(P)H:plastoquinone, via FMN and iron-sulfur (Fe-S) centers, to quinones in the photosynthetic chain and possibly in a chloroplast respiratory chain. The immediate electron acceptor for the enzyme in this species is believed to be plastoquinone. Couples the redox reaction to proton translocation, and thus conserves the redox energy in a proton gradient. The protein is NAD(P)H-quinone oxidoreductase subunit 6, chloroplastic (ndhG) of Lobularia maritima (Sweet alyssum).